The primary structure comprises 1412 residues: DNA-directed RNA polymerase subunit beta' (1412 aa).

Residues Cys70, Cys72, Cys85, and Cys88 each contribute to the Zn(2+) site. Asp458, Asp460, and Asp462 together coordinate Mg(2+). Positions 813, 887, 894, and 897 each coordinate Zn(2+). The disordered stretch occupies residues 1388 to 1412; sequence EQALLTPATTAEAVVGEEPAPPPAQ. A compositionally biased stretch (low complexity) spans 1393–1405; that stretch reads TPATTAEAVVGEE.

It belongs to the RNA polymerase beta' chain family. In terms of assembly, the RNAP catalytic core consists of 2 alpha, 1 beta, 1 beta' and 1 omega subunit. When a sigma factor is associated with the core the holoenzyme is formed, which can initiate transcription. Mg(2+) is required as a cofactor. It depends on Zn(2+) as a cofactor.

It carries out the reaction RNA(n) + a ribonucleoside 5'-triphosphate = RNA(n+1) + diphosphate. Functionally, DNA-dependent RNA polymerase catalyzes the transcription of DNA into RNA using the four ribonucleoside triphosphates as substrates. This is DNA-directed RNA polymerase subunit beta' from Methylibium petroleiphilum (strain ATCC BAA-1232 / LMG 22953 / PM1).